Consider the following 124-residue polypeptide: Small ribosomal subunit protein bS16 (124 aa).

Positions 81-90 (LKKRPARNNP) are enriched in basic residues. The tract at residues 81 to 124 (LKKRPARNNPHKGEPGKKAQERIAAAKQAAEDAAAAAEADSASE) is disordered. Residues 91-101 (HKGEPGKKAQE) show a composition bias toward basic and acidic residues. Positions 102-124 (RIAAAKQAAEDAAAAAEADSASE) are enriched in low complexity.

It belongs to the bacterial ribosomal protein bS16 family.

In Bartonella tribocorum (strain CIP 105476 / IBS 506), this protein is Small ribosomal subunit protein bS16.